The sequence spans 454 residues: Bifunctional protein GlmU (454 aa).

Residues 1–225 form a pyrophosphorylase region; it reads MNIVILAAGM…LWETLGVNSK (225 aa). UDP-N-acetyl-alpha-D-glucosamine-binding positions include 6–9, lysine 20, glutamine 71, 76–77, 98–100, glycine 135, glutamate 150, asparagine 165, and asparagine 223; these read LAAG, GT, and YGD. Position 100 (aspartate 100) interacts with Mg(2+). Asparagine 223 provides a ligand contact to Mg(2+). Positions 226 to 246 are linker; the sequence is VQLAEVERIHQRNLAQRLLET. Residues 247-454 form an N-acetyltransferase region; that stretch reads GVTLADPARI…WQRPVKKAKQ (208 aa). Residues arginine 329 and lysine 347 each contribute to the UDP-N-acetyl-alpha-D-glucosamine site. Histidine 359 (proton acceptor) is an active-site residue. Tyrosine 362 and asparagine 373 together coordinate UDP-N-acetyl-alpha-D-glucosamine. Residues alanine 376, 382 to 383, serine 401, alanine 419, and arginine 436 contribute to the acetyl-CoA site; that span reads NY.

In the N-terminal section; belongs to the N-acetylglucosamine-1-phosphate uridyltransferase family. This sequence in the C-terminal section; belongs to the transferase hexapeptide repeat family. As to quaternary structure, homotrimer. Mg(2+) serves as cofactor.

Its subcellular location is the cytoplasm. The enzyme catalyses alpha-D-glucosamine 1-phosphate + acetyl-CoA = N-acetyl-alpha-D-glucosamine 1-phosphate + CoA + H(+). It catalyses the reaction N-acetyl-alpha-D-glucosamine 1-phosphate + UTP + H(+) = UDP-N-acetyl-alpha-D-glucosamine + diphosphate. The protein operates within nucleotide-sugar biosynthesis; UDP-N-acetyl-alpha-D-glucosamine biosynthesis; N-acetyl-alpha-D-glucosamine 1-phosphate from alpha-D-glucosamine 6-phosphate (route II): step 2/2. It functions in the pathway nucleotide-sugar biosynthesis; UDP-N-acetyl-alpha-D-glucosamine biosynthesis; UDP-N-acetyl-alpha-D-glucosamine from N-acetyl-alpha-D-glucosamine 1-phosphate: step 1/1. It participates in bacterial outer membrane biogenesis; LPS lipid A biosynthesis. Functionally, catalyzes the last two sequential reactions in the de novo biosynthetic pathway for UDP-N-acetylglucosamine (UDP-GlcNAc). The C-terminal domain catalyzes the transfer of acetyl group from acetyl coenzyme A to glucosamine-1-phosphate (GlcN-1-P) to produce N-acetylglucosamine-1-phosphate (GlcNAc-1-P), which is converted into UDP-GlcNAc by the transfer of uridine 5-monophosphate (from uridine 5-triphosphate), a reaction catalyzed by the N-terminal domain. The sequence is that of Bifunctional protein GlmU from Cupriavidus pinatubonensis (strain JMP 134 / LMG 1197) (Cupriavidus necator (strain JMP 134)).